The sequence spans 121 residues: Large ribosomal subunit protein uL18 (121 aa).

It belongs to the universal ribosomal protein uL18 family. Part of the 50S ribosomal subunit; part of the 5S rRNA/L5/L18/L25 subcomplex. Contacts the 5S and 23S rRNAs.

This is one of the proteins that bind and probably mediate the attachment of the 5S RNA into the large ribosomal subunit, where it forms part of the central protuberance. The protein is Large ribosomal subunit protein uL18 of Desulfotalea psychrophila (strain LSv54 / DSM 12343).